We begin with the raw amino-acid sequence, 254 residues long: Diphthine synthase (254 aa).

S-adenosyl-L-methionine contacts are provided by residues leucine 11, aspartate 87, isoleucine 90, 115 to 116, leucine 167, leucine 208, and histidine 233; that span reads SV.

It belongs to the diphthine synthase family. Homodimer.

It catalyses the reaction 2-[(3S)-amino-3-carboxypropyl]-L-histidyl-[translation elongation factor 2] + 3 S-adenosyl-L-methionine = diphthine-[translation elongation factor 2] + 3 S-adenosyl-L-homocysteine + 3 H(+). The protein operates within protein modification; peptidyl-diphthamide biosynthesis. Functionally, S-adenosyl-L-methionine-dependent methyltransferase that catalyzes the trimethylation of the amino group of the modified target histidine residue in translation elongation factor 2 (EF-2), to form an intermediate called diphthine. The three successive methylation reactions represent the second step of diphthamide biosynthesis. This Metallosphaera sedula (strain ATCC 51363 / DSM 5348 / JCM 9185 / NBRC 15509 / TH2) protein is Diphthine synthase.